Reading from the N-terminus, the 324-residue chain is UDP-N-acetylenolpyruvoylglucosamine reductase (324 aa).

One can recognise an FAD-binding PCMH-type domain in the interval 36–203 (FRAGGLAELM…THAIFEGYAE (168 aa)). Arg-183 is an active-site residue. Ser-232 functions as the Proton donor in the catalytic mechanism. The active site involves Glu-302.

It belongs to the MurB family. FAD serves as cofactor.

It is found in the cytoplasm. The catalysed reaction is UDP-N-acetyl-alpha-D-muramate + NADP(+) = UDP-N-acetyl-3-O-(1-carboxyvinyl)-alpha-D-glucosamine + NADPH + H(+). It functions in the pathway cell wall biogenesis; peptidoglycan biosynthesis. Functionally, cell wall formation. This Rhizobium meliloti (strain 1021) (Ensifer meliloti) protein is UDP-N-acetylenolpyruvoylglucosamine reductase.